Here is a 29-residue protein sequence, read N- to C-terminus: Trypsin inhibitor 3 (29 aa).

3 cysteine pairs are disulfide-bonded: cysteine 3–cysteine 20, cysteine 10–cysteine 22, and cysteine 16–cysteine 28.

Belongs to the protease inhibitor I7 (squash-type serine protease inhibitor) family.

It is found in the secreted. Strongly inhibits trypsin, weakly inhibits chymotrypsin. The polypeptide is Trypsin inhibitor 3 (Cyclanthera pedata (Achocha)).